The primary structure comprises 250 residues: tRNA pseudouridine synthase A (250 aa).

D53 (nucleophile) is an active-site residue. Y111 contributes to the substrate binding site.

It belongs to the tRNA pseudouridine synthase TruA family. In terms of assembly, homodimer.

It catalyses the reaction uridine(38/39/40) in tRNA = pseudouridine(38/39/40) in tRNA. Functionally, formation of pseudouridine at positions 38, 39 and 40 in the anticodon stem and loop of transfer RNAs. The polypeptide is tRNA pseudouridine synthase A (Streptococcus uberis (strain ATCC BAA-854 / 0140J)).